The sequence spans 207 residues: Octanoyltransferase (207 aa).

One can recognise a BPL/LPL catalytic domain in the interval 27-202 (GETPDELWIV…HLETRLARPQ (176 aa)). Substrate contacts are provided by residues 66-73 (RGGQITYH), 133-135 (SLG), and 146-148 (GLS). The Acyl-thioester intermediate role is filled by Cys164.

It belongs to the LipB family.

It is found in the cytoplasm. It catalyses the reaction octanoyl-[ACP] + L-lysyl-[protein] = N(6)-octanoyl-L-lysyl-[protein] + holo-[ACP] + H(+). It functions in the pathway protein modification; protein lipoylation via endogenous pathway; protein N(6)-(lipoyl)lysine from octanoyl-[acyl-carrier-protein]: step 1/2. Functionally, catalyzes the transfer of endogenously produced octanoic acid from octanoyl-acyl-carrier-protein onto the lipoyl domains of lipoate-dependent enzymes. Lipoyl-ACP can also act as a substrate although octanoyl-ACP is likely to be the physiological substrate. The protein is Octanoyltransferase of Laribacter hongkongensis (strain HLHK9).